The following is an 869-amino-acid chain: Leucine--tRNA ligase (869 aa).

A 'HIGH' region motif is present at residues 51–61 (PYPSGRIHMGH). A 'KMSKS' region motif is present at residues 636-640 (KMSKS). K639 serves as a coordination point for ATP.

It belongs to the class-I aminoacyl-tRNA synthetase family.

Its subcellular location is the cytoplasm. The catalysed reaction is tRNA(Leu) + L-leucine + ATP = L-leucyl-tRNA(Leu) + AMP + diphosphate. In Dinoroseobacter shibae (strain DSM 16493 / NCIMB 14021 / DFL 12), this protein is Leucine--tRNA ligase.